The sequence spans 193 residues: MENSLGSYEKELNLKATELRLGLPGSDEPEKRATARSNKRSSPEASDEESISNGSDVTKEDNVVPPAKAQVVGWPPIRSYRKNNVQQKKEEESEGNGMYVKVSMAGAPYLRKIDLKVYKSYPELLKALENMFKCIFGEYSEREGYNGSEYAPTYEDKDGDWMLVGDVPWNMFVSSCKRLRIMKGSEAKGLGCF.

The interval 16 to 68 is disordered; it reads ATELRLGLPGSDEPEKRATARSNKRSSPEASDEESISNGSDVTKEDNVVPPAK. The EAR-like (transcriptional repression) motif lies at 19 to 23; the sequence is LRLGL. Residues 97–184 form the PB1 domain; it reads GMYVKVSMAG…SCKRLRIMKG (88 aa).

It belongs to the Aux/IAA family. Homodimers and heterodimers.

The protein localises to the nucleus. Its function is as follows. Aux/IAA proteins are short-lived transcriptional factors that function as repressors of early auxin response genes at low auxin concentrations. Repression is thought to result from the interaction with auxin response factors (ARFs), proteins that bind to the auxin-responsive promoter element (AuxRE). Formation of heterodimers with ARF proteins may alter their ability to modulate early auxin response genes expression. This is Auxin-induced protein 22D (AUX22D) from Vigna radiata var. radiata (Mung bean).